The following is a 240-amino-acid chain: Methylthioribulose-1-phosphate dehydratase (240 aa).

Position 99 (cysteine 99) interacts with substrate. Positions 116 and 118 each coordinate Zn(2+). Residue glutamate 145 is the Proton donor/acceptor of the active site. Residue histidine 201 participates in Zn(2+) binding.

Belongs to the aldolase class II family. MtnB subfamily. Zn(2+) is required as a cofactor.

It is found in the cytoplasm. The catalysed reaction is 5-(methylsulfanyl)-D-ribulose 1-phosphate = 5-methylsulfanyl-2,3-dioxopentyl phosphate + H2O. Its pathway is amino-acid biosynthesis; L-methionine biosynthesis via salvage pathway; L-methionine from S-methyl-5-thio-alpha-D-ribose 1-phosphate: step 2/6. Catalyzes the dehydration of methylthioribulose-1-phosphate (MTRu-1-P) into 2,3-diketo-5-methylthiopentyl-1-phosphate (DK-MTP-1-P). The sequence is that of Methylthioribulose-1-phosphate dehydratase from Paracoccidioides lutzii (strain ATCC MYA-826 / Pb01) (Paracoccidioides brasiliensis).